A 174-amino-acid polypeptide reads, in one-letter code: 3-hydroxydecanoyl-[acyl-carrier-protein] dehydratase (174 aa).

His-71 is an active-site residue.

The protein belongs to the thioester dehydratase family. FabA subfamily. As to quaternary structure, homodimer.

The protein localises to the cytoplasm. It carries out the reaction a (3R)-hydroxyacyl-[ACP] = a (2E)-enoyl-[ACP] + H2O. The enzyme catalyses (3R)-hydroxydecanoyl-[ACP] = (2E)-decenoyl-[ACP] + H2O. It catalyses the reaction (2E)-decenoyl-[ACP] = (3Z)-decenoyl-[ACP]. Its pathway is lipid metabolism; fatty acid biosynthesis. Its function is as follows. Necessary for the introduction of cis unsaturation into fatty acids. Catalyzes the dehydration of (3R)-3-hydroxydecanoyl-ACP to E-(2)-decenoyl-ACP and then its isomerization to Z-(3)-decenoyl-ACP. Can catalyze the dehydratase reaction for beta-hydroxyacyl-ACPs with saturated chain lengths up to 16:0, being most active on intermediate chain length. In Nitrobacter hamburgensis (strain DSM 10229 / NCIMB 13809 / X14), this protein is 3-hydroxydecanoyl-[acyl-carrier-protein] dehydratase.